We begin with the raw amino-acid sequence, 110 residues long: Small heat shock protein hspG11 (110 aa).

One can recognise a sHSP domain in the interval 30–110 (KTIIDILPPM…KSTSTSSTFR (81 aa)). The disordered stretch occupies residues 78–110 (KDLNKQHNNNNNNNNNNNNLVIEKSTSTSSTFR). The segment covering 85-96 (NNNNNNNNNNNN) has biased composition (low complexity). The segment covering 101–110 (KSTSTSSTFR) has biased composition (polar residues).

This sequence belongs to the small heat shock protein (HSP20) family.

The sequence is that of Small heat shock protein hspG11 (hspG11) from Dictyostelium discoideum (Social amoeba).